The sequence spans 313 residues: Ribosomal protein L11 methyltransferase (313 aa).

4 residues coordinate S-adenosyl-L-methionine: threonine 151, glycine 172, aspartate 194, and asparagine 245.

This sequence belongs to the methyltransferase superfamily. PrmA family.

The protein resides in the cytoplasm. It carries out the reaction L-lysyl-[protein] + 3 S-adenosyl-L-methionine = N(6),N(6),N(6)-trimethyl-L-lysyl-[protein] + 3 S-adenosyl-L-homocysteine + 3 H(+). Methylates ribosomal protein L11. This chain is Ribosomal protein L11 methyltransferase, found in Nitrosomonas europaea (strain ATCC 19718 / CIP 103999 / KCTC 2705 / NBRC 14298).